A 200-amino-acid polypeptide reads, in one-letter code: NAD(P)H dehydrogenase (quinone) (200 aa).

A Flavodoxin-like domain is found at Val4 to Val191. FMN contacts are provided by residues Ser10–Val15 and Thr79–Phe81. Tyr12 is an NAD(+) binding site. A substrate-binding site is contributed by Trp99. FMN is bound by residues Ser114–Gly120 and His135.

It belongs to the WrbA family. FMN serves as cofactor.

The enzyme catalyses a quinone + NADH + H(+) = a quinol + NAD(+). The catalysed reaction is a quinone + NADPH + H(+) = a quinol + NADP(+). The polypeptide is NAD(P)H dehydrogenase (quinone) (Burkholderia vietnamiensis (strain G4 / LMG 22486) (Burkholderia cepacia (strain R1808))).